The sequence spans 440 residues: Transposon Ty1-DR3 Gag polyprotein (440 aa).

Polar residues-rich tracts occupy residues 1 to 10 (MESQQLSNYP), 48 to 60 (TKAN…TPAS), and 127 to 152 (QSQF…GNTF). Disordered stretches follow at residues 1 to 93 (MESQ…MMTQ), 126 to 173 (PQSQ…RPPP), and 352 to 440 (GSRN…PETY). Residues 153 to 165 (TDSSSADSDMTST) show a composition bias toward low complexity. The segment at 299-401 (NNGIHINNKV…NSKSKTARAH (103 aa)) is RNA-binding. The span at 402 to 428 (NVSTSINSPSTDNDSISKSTTEPIQLN) shows a compositional bias: polar residues. At Ser416 the chain carries Phosphoserine. Basic and acidic residues predominate over residues 429 to 440 (NKHDLHLRPETY).

In terms of assembly, homotrimer.

It is found in the cytoplasm. Functionally, capsid protein (CA) is the structural component of the virus-like particle (VLP), forming the shell that encapsulates the retrotransposons dimeric RNA genome. The particles are assembled from trimer-clustered units and there are holes in the capsid shells that allow for the diffusion of macromolecules. CA also has nucleocapsid-like chaperone activity, promoting primer tRNA(i)-Met annealing to the multipartite primer-binding site (PBS), dimerization of Ty1 RNA and initiation of reverse transcription. This Saccharomyces cerevisiae (strain ATCC 204508 / S288c) (Baker's yeast) protein is Transposon Ty1-DR3 Gag polyprotein (TY1A-DR3).